The chain runs to 338 residues: 1-aminocyclopropane-1-carboxylate deaminase (338 aa).

The residue at position 51 (lysine 51) is an N6-(pyridoxal phosphate)lysine. Residue serine 78 is the Nucleophile of the active site.

It belongs to the ACC deaminase/D-cysteine desulfhydrase family. As to quaternary structure, homotrimer. The cofactor is pyridoxal 5'-phosphate.

The catalysed reaction is 1-aminocyclopropane-1-carboxylate + H2O = 2-oxobutanoate + NH4(+). In terms of biological role, catalyzes a cyclopropane ring-opening reaction, the irreversible conversion of 1-aminocyclopropane-1-carboxylate (ACC) to ammonia and alpha-ketobutyrate. Allows growth on ACC as a nitrogen source. The sequence is that of 1-aminocyclopropane-1-carboxylate deaminase from Burkholderia pseudomallei (strain 1106a).